The primary structure comprises 236 residues: Small ribosomal subunit protein uS2c (236 aa).

Belongs to the universal ribosomal protein uS2 family.

The protein localises to the plastid. It localises to the chloroplast. The sequence is that of Small ribosomal subunit protein uS2c (rps2) from Nymphaea alba (White water-lily).